Consider the following 102-residue polypeptide: Small ribosomal subunit protein uS10 (102 aa).

This sequence belongs to the universal ribosomal protein uS10 family. As to quaternary structure, part of the 30S ribosomal subunit.

In terms of biological role, involved in the binding of tRNA to the ribosomes. This chain is Small ribosomal subunit protein uS10, found in Nitrosomonas eutropha (strain DSM 101675 / C91 / Nm57).